The primary structure comprises 412 residues: Elongation factor 1-gamma 2 (412 aa).

Serine 2 carries the N-acetylserine modification. A GST N-terminal domain is found at 2 to 77; that stretch reads SQGTLYINRS…YLANQVADEK (76 aa). The region spanning 86–217 is the GST C-terminal domain; that stretch reads DVIEKSQILR…AEKALTYTPP (132 aa). The disordered stretch occupies residues 216 to 253; sequence PPKKQKAEKPKAEKSKAEKKKDEAKPADDAAPAKKPKH. The segment covering 220-247 has biased composition (basic and acidic residues); that stretch reads QKAEKPKAEKSKAEKKKDEAKPADDAAP. In terms of domain architecture, EF-1-gamma C-terminal spans 251–412; sequence PKHPLEALGK…KEIVDGKVLK (162 aa).

In terms of assembly, the eukaryotic elongation factor 1 complex (eEF1) is probably a heterohexamer. Two trimeric complexes, each composed of eEF1A (TEF1 or TEF2), eEF1Balpha (EFB1) and eEF1Bgamma (CAM1 or TEF4), are probably dimerized via the eF1Bgamma subunits. The eEF1B subcomplex with the GEF activity is formed of eEF1Balpha and eEF1Bgamma. TEF4 interacts with EFB1.

The protein localises to the cytoplasm. The protein operates within protein biosynthesis; polypeptide chain elongation. Functionally, subunit of the eukaryotic elongation factor 1 complex (eEF1). Probably plays a role in anchoring the complex to other cellular components. This Saccharomyces cerevisiae (strain ATCC 204508 / S288c) (Baker's yeast) protein is Elongation factor 1-gamma 2 (TEF4).